A 418-amino-acid chain; its full sequence is Phosphoglycerate kinase (418 aa).

(2R)-3-phosphoglycerate is bound by residues Val24, Asp25, Phe26, Asn27, Arg40, Ser63, His64, Gly66, Arg67, Leu122, Arg123, His169, and Arg170. Gly213 contacts ADP. Gly213 serves as a coordination point for CDP. Ala214 and Lys215 together coordinate AMP. Residue Ala214 participates in ATP binding. Ala214 lines the Mg(2+) pocket. Mg(2+) contacts are provided by Ala217 and Asp218. Residue Asp218 participates in CDP binding. An AMP-binding site is contributed by Lys219. Lys219 lines the ATP pocket. Gly237 is an ADP binding site. Gly237 is a CDP binding site. Residues Gly238 and Gly312 each contribute to the AMP site. Positions 238 and 312 each coordinate ATP. CDP-binding residues include Gly337 and Phe342. Phe342 is an ADP binding site. Position 343 (Glu343) interacts with AMP. Positions 343, 374, and 375 each coordinate ATP. Asp374 contacts Mg(2+).

This sequence belongs to the phosphoglycerate kinase family. As to quaternary structure, monomer. It depends on Mg(2+) as a cofactor.

The enzyme catalyses (2R)-3-phosphoglycerate + ATP = (2R)-3-phospho-glyceroyl phosphate + ADP. It participates in carbohydrate degradation; glycolysis; pyruvate from D-glyceraldehyde 3-phosphate: step 2/5. The sequence is that of Phosphoglycerate kinase (PGK) from Euplotes crassus.